Here is a 108-residue protein sequence, read N- to C-terminus: uncharacterized protein (108 aa).

The span at M1–G15 shows a compositional bias: polar residues. A disordered region spans residues M1–G29. Positions R16–G29 are enriched in basic and acidic residues.

Belongs to the SUI1 family.

This is an uncharacterized protein from Salmonella typhi.